Here is a 914-residue protein sequence, read N- to C-terminus: Trafficking kinesin-binding protein 2 (914 aa).

Residues 1–21 (MSQSQNAIFTSPTGEENLMNS) are compositionally biased toward polar residues. The segment at 1 to 30 (MSQSQNAIFTSPTGEENLMNSNHRDSESIT) is disordered. The 306-residue stretch at 48-353 (EEQLPQYRLK…QEEIKELRSR (306 aa)) folds into the HAP1 N-terminal domain. Residues 134–354 (QALLKRNHVL…EEIKELRSRS (221 aa)) are a coiled coil. The tract at residues 359–509 (HLYFSQSYGA…KQFFAEEWQR (151 aa)) is interaction with HGS. The residue at position 420 (Ser-420) is a Phosphoserine. Disordered stretches follow at residues 447-482 (QQTE…DSDL) and 765-787 (QPLP…SPCP). The segment covering 454–471 (LLNQGSSSEEVAGSSQKM) has biased composition (polar residues). Over residues 775–787 (STPPNSPSHSPCP) the composition is skewed to pro residues.

Belongs to the milton family. As to quaternary structure, interacts with GABA-A receptor and O-GlcNAc transferase. Interacts with HGS. Interacts with RHOT1/Miro-1 and RHOT2/Miro-2. In terms of processing, O-glycosylated. In terms of tissue distribution, widely expressed, with highest expression in heart.

It is found in the cytoplasm. Its subcellular location is the early endosome. It localises to the mitochondrion. May regulate endosome-to-lysosome trafficking of membrane cargo, including EGFR. The sequence is that of Trafficking kinesin-binding protein 2 (TRAK2) from Homo sapiens (Human).